Reading from the N-terminus, the 493-residue chain is uncharacterized protein (493 aa).

Residues 10–30 form a helical membrane-spanning segment; the sequence is LVPSTRFALSLVMFFGCLVTY. N35, N47, and N69 each carry an N-linked (GlcNAc...) asparagine glycan. The next 6 helical transmembrane spans lie at 85 to 105, 112 to 132, 144 to 164, 175 to 195, 205 to 225, and 272 to 292; these read MVLS…GHLA, RVVF…PVAA, AAIG…WSVW, GVTY…SGFL, PSIF…WWYV, and AVWA…TMLV. An N-linked (GlcNAc...) asparagine glycan is attached at N305. The next 4 membrane-spanning stretches (helical) occupy residues 311-331, 348-368, 375-395, and 406-426; these read AVAS…GVLA, AAML…GYCG, VIIF…GFVV, and GTVM…SPAV. An N-linked (GlcNAc...) asparagine glycan is attached at N433. The helical transmembrane segment at 441–461 threads the bilayer; it reads MVLWLTAGILTIGALLFSIFA.

This sequence belongs to the major facilitator superfamily. Sodium/anion cotransporter family.

It localises to the membrane. This is an uncharacterized protein from Caenorhabditis elegans.